Here is a 389-residue protein sequence, read N- to C-terminus: Probable protein phosphatase 2C 12 (389 aa).

The PPM-type phosphatase domain occupies 42–356 (VASLFSQRGK…DDCSAVCLFL (315 aa)). Residues Asp-77 and Gly-78 each coordinate Mn(2+). Residues 119–145 (AFSDDAAASSSADSSGNSSPQPSASAS) form a disordered region. Positions 121–145 (SDDAAASSSADSSGNSSPQPSASAS) are enriched in low complexity. Mn(2+) is bound by residues Asp-301 and Asp-347.

The protein belongs to the PP2C family. It depends on Mg(2+) as a cofactor. Requires Mn(2+) as cofactor.

It catalyses the reaction O-phospho-L-seryl-[protein] + H2O = L-seryl-[protein] + phosphate. It carries out the reaction O-phospho-L-threonyl-[protein] + H2O = L-threonyl-[protein] + phosphate. This Oryza sativa subsp. japonica (Rice) protein is Probable protein phosphatase 2C 12.